We begin with the raw amino-acid sequence, 177 residues long: Bifunctional protein PyrR (177 aa).

Residues V99–T111 carry the PRPP-binding motif.

The protein belongs to the purine/pyrimidine phosphoribosyltransferase family. PyrR subfamily. Homodimer and homohexamer; in equilibrium.

It catalyses the reaction UMP + diphosphate = 5-phospho-alpha-D-ribose 1-diphosphate + uracil. Its function is as follows. Regulates transcriptional attenuation of the pyrimidine nucleotide (pyr) operon by binding in a uridine-dependent manner to specific sites on pyr mRNA. This disrupts an antiterminator hairpin in the RNA and favors formation of a downstream transcription terminator, leading to a reduced expression of downstream genes. Functionally, also displays a weak uracil phosphoribosyltransferase activity which is not physiologically significant. In Clostridioides difficile (strain 630) (Peptoclostridium difficile), this protein is Bifunctional protein PyrR.